A 328-amino-acid chain; its full sequence is MNTVDYLRISLIDRCNFRCQYCMPEGAEIDYILKQDLLTDNELLSLLKEVFIPVGFTRFRLTGGEPLLRPNVIGLIEAIASFPETKDLSMTTNGFLLSKMAKDLYKAGLRRINISLDTLDSDTFNLIIGNKNRSHWQLVWNGIQAAYEVGFDPLKINVVIIPGVNDHEVLDLAALTINRNWHIRFIEFMPIGNDKLFDNKGWISSEELRQIIRKKWGLTESFVPGNGPADIFQIPGAKGTLGFISQMSECFCDRCNRMRLSADGWLRPCLLNEIGQIDLKSSLRNGISVEELRQQVEYLLGLKPEINFKQRESGTTGIYSRTMSQIGG.

A Radical SAM core domain is found at 1–229; sequence MNTVDYLRIS…ESFVPGNGPA (229 aa). Position 8 (arginine 8) interacts with GTP. [4Fe-4S] cluster contacts are provided by cysteine 15 and cysteine 19. Tyrosine 21 contacts S-adenosyl-L-methionine. Position 22 (cysteine 22) interacts with [4Fe-4S] cluster. Arginine 60 provides a ligand contact to GTP. Glycine 64 is an S-adenosyl-L-methionine binding site. GTP is bound at residue threonine 91. Serine 115 contributes to the S-adenosyl-L-methionine binding site. Position 155 (lysine 155) interacts with GTP. Methionine 189 serves as a coordination point for S-adenosyl-L-methionine. The [4Fe-4S] cluster site is built by cysteine 252 and cysteine 255. Position 257–259 (257–259) interacts with GTP; the sequence is RMR. Cysteine 269 lines the [4Fe-4S] cluster pocket.

This sequence belongs to the radical SAM superfamily. MoaA family. Monomer and homodimer. [4Fe-4S] cluster serves as cofactor.

The catalysed reaction is GTP + AH2 + S-adenosyl-L-methionine = (8S)-3',8-cyclo-7,8-dihydroguanosine 5'-triphosphate + 5'-deoxyadenosine + L-methionine + A + H(+). The protein operates within cofactor biosynthesis; molybdopterin biosynthesis. In terms of biological role, catalyzes the cyclization of GTP to (8S)-3',8-cyclo-7,8-dihydroguanosine 5'-triphosphate. The polypeptide is GTP 3',8-cyclase (Trichodesmium erythraeum (strain IMS101)).